The primary structure comprises 133 residues: Small ribosomal subunit protein uS9 (133 aa).

A compositionally biased stretch (basic and acidic residues) spans 102 to 113 (KVEGYLSRDPRA). A disordered region spans residues 102–133 (KVEGYLSRDPRAKERRKYGLKKARKAPQFSKR). Basic residues predominate over residues 114-133 (KERRKYGLKKARKAPQFSKR).

The protein belongs to the universal ribosomal protein uS9 family.

The sequence is that of Small ribosomal subunit protein uS9 from Gloeobacter violaceus (strain ATCC 29082 / PCC 7421).